Here is a 356-residue protein sequence, read N- to C-terminus: Biotin synthase (356 aa).

Residues 54–278 form the Radical SAM core domain; sequence GEVQLCTLLS…VAVARITMPL (225 aa). The [4Fe-4S] cluster site is built by C69, C73, and C76. Residues C113, C144, C204, and R282 each contribute to the [2Fe-2S] cluster site.

The protein belongs to the radical SAM superfamily. Biotin synthase family. As to quaternary structure, homodimer. The cofactor is [4Fe-4S] cluster. [2Fe-2S] cluster is required as a cofactor.

It catalyses the reaction (4R,5S)-dethiobiotin + (sulfur carrier)-SH + 2 reduced [2Fe-2S]-[ferredoxin] + 2 S-adenosyl-L-methionine = (sulfur carrier)-H + biotin + 2 5'-deoxyadenosine + 2 L-methionine + 2 oxidized [2Fe-2S]-[ferredoxin]. It participates in cofactor biosynthesis; biotin biosynthesis; biotin from 7,8-diaminononanoate: step 2/2. Its function is as follows. Catalyzes the conversion of dethiobiotin (DTB) to biotin by the insertion of a sulfur atom into dethiobiotin via a radical-based mechanism. This Novosphingobium aromaticivorans (strain ATCC 700278 / DSM 12444 / CCUG 56034 / CIP 105152 / NBRC 16084 / F199) protein is Biotin synthase.